The primary structure comprises 346 residues: Very-long-chain 3-oxoacyl-CoA reductase (346 aa).

Residues 26-46 form a helical membrane-spanning segment; it reads TASVLLVAGGWFVVSRVWTFL. NADP(+) is bound by residues isoleucine 71, aspartate 126, aspartate 134, asparagine 153, tyrosine 220, lysine 224, isoleucine 253, and serine 255. Tyrosine 220 (proton donor) is an active-site residue. The Lowers pKa of active site Tyr role is filled by lysine 224.

It belongs to the short-chain dehydrogenases/reductases (SDR) family.

The protein localises to the endoplasmic reticulum membrane. It carries out the reaction a very-long-chain (3R)-3-hydroxyacyl-CoA + NADP(+) = a very-long-chain 3-oxoacyl-CoA + NADPH + H(+). The protein operates within lipid metabolism; fatty acid biosynthesis. Its function is as follows. Component of the microsomal membrane bound fatty acid elongation system, which produces the 26-carbon very long-chain fatty acids (VLCFA) from palmitate. Catalyzes the reduction of the 3-ketoacyl-CoA intermediate that is formed in each cycle of fatty acid elongation. VLCFAs serve as precursors for ceramide and sphingolipids. In Emericella nidulans (strain FGSC A4 / ATCC 38163 / CBS 112.46 / NRRL 194 / M139) (Aspergillus nidulans), this protein is Very-long-chain 3-oxoacyl-CoA reductase.